The sequence spans 501 residues: Glycine betaine/proline/ectoine/pipecolic acid transporter OusA (501 aa).

Residues 1-38 are Cytoplasmic-facing; the sequence is MKLKRKRVKPIALDDVTIIDDGRLRKAITAAALGNAME. The helical transmembrane segment at 39–59 threads the bilayer; the sequence is WFDFGVYGFVAYALGQVFFPG. The Periplasmic portion of the chain corresponds to 60 to 66; sequence ADPGVQM. The helical transmembrane segment at 67–87 threads the bilayer; sequence IAALATFSVPFLIRPLGGVFF. The Cytoplasmic portion of the chain corresponds to 88 to 98; it reads GALGDKYGRQK. The chain crosses the membrane as a helical span at residues 99-119; the sequence is ILAITIIIMSISTFCIGLIPS. Residues 120 to 122 are Periplasmic-facing; the sequence is YER. Residues 123–143 form a helical membrane-spanning segment; that stretch reads IGIWAPILLLLAKMAQGFSVG. Residues 144 to 170 lie on the Cytoplasmic side of the membrane; the sequence is GEYTGASIFVAEYSPDRKRGFMGSWLD. The chain crosses the membrane as a helical span at residues 171–191; it reads FGSIAGFVLGAGVVVLISTLI. Residues 192-195 lie on the Periplasmic side of the membrane; that stretch reads GEQA. Residues 196-216 form a helical membrane-spanning segment; it reads FLAWGWRLPFFLALPLGLIGL. The Cytoplasmic portion of the chain corresponds to 217–261; the sequence is YLRHALEETPAFRQHVEKLEQNDRDGLKAGPGVSFREIATHHWKS. Residues 262–282 form a helical membrane-spanning segment; it reads LLVCIGLVIATNVTYYMLLTY. Residues 283 to 298 are Periplasmic-facing; that stretch reads MPSYLSHSLHYSENHG. The helical transmembrane segment at 299 to 319 threads the bilayer; sequence VLIIIAIMIGMLFVQPVMGLL. At 320-326 the chain is on the cytoplasmic side; sequence SDRFGRK. The helical transmembrane segment at 327 to 347 threads the bilayer; sequence PFVVIGSVAMFFLAVPSFMLI. At 348–350 the chain is on the periplasmic side; that stretch reads NSD. A helical transmembrane segment spans residues 351–371; it reads IIGLIFLGLLMLAVILNAFTG. Residues 372-391 are Cytoplasmic-facing; it reads VMASTLPALFPTHIRYSALA. A helical transmembrane segment spans residues 392-412; the sequence is SAFNISVLIAGLTPTVAAWLV. Topologically, residues 413–417 are periplasmic; the sequence is ESSQN. The chain crosses the membrane as a helical span at residues 418 to 438; the sequence is LYMPAYYLMVIAVIGLLTGLF. Over 439–501 the chain is Cytoplasmic; that stretch reads MKETANKPLK…LVAQHPRIND (63 aa). Positions 461 to 495 form a coiled coil; the sequence is KEILQEHHDNIEHKIEDITQQIAELEAKRQLLVAQ.

It belongs to the major facilitator superfamily. Sugar transporter (TC 2.A.1.1) family.

It localises to the cell inner membrane. In terms of biological role, involved in uptake and accumulation of various osmoprotectants. Allows the uptake of glycine betaine, proline, ectoine, and pipecolic acid. May be a contributory factor in the infection progression within the host. The chain is Glycine betaine/proline/ectoine/pipecolic acid transporter OusA from Dickeya dadantii (strain 3937) (Erwinia chrysanthemi (strain 3937)).